The sequence spans 105 residues: Small ribosomal subunit protein uS10 (105 aa).

This sequence belongs to the universal ribosomal protein uS10 family. As to quaternary structure, part of the 30S ribosomal subunit.

In terms of biological role, involved in the binding of tRNA to the ribosomes. The polypeptide is Small ribosomal subunit protein uS10 (Desulfovibrio desulfuricans (strain ATCC 27774 / DSM 6949 / MB)).